The following is a 148-amino-acid chain: Large ribosomal subunit protein uL15 (148 aa).

Positions 1–40 (MADILQMHDLKPAPGANKDRIRVGRGEGSKGKTSGRGDKG) are enriched in basic and acidic residues. The disordered stretch occupies residues 1–47 (MADILQMHDLKPAPGANKDRIRVGRGEGSKGKTSGRGDKGTKKRYQV).

It belongs to the universal ribosomal protein uL15 family. Part of the 50S ribosomal subunit.

Binds to the 23S rRNA. The sequence is that of Large ribosomal subunit protein uL15 from Bifidobacterium adolescentis (strain ATCC 15703 / DSM 20083 / NCTC 11814 / E194a).